The following is a 476-amino-acid chain: Protein transport protein Sec61 subunit alpha isoform A (476 aa).

The Cytoplasmic portion of the chain corresponds to 2-33 (GIKFLEVIKPFCAVLPEIQKPERKIQFREKVL). Residues 34-53 (WTAITLFIFLVCCQIPLFGI) form a helical membrane-spanning segment. Over 54–76 (MSSDSADPFYWMRVILASNRGTL) the chain is Lumenal. A helical transmembrane segment spans residues 77 to 96 (MELGISPIVTSGLIMQLLAG). At 97 to 117 (AKIIEVGDTPKDRALFNGAQK) the chain is on the cytoplasmic side. The helical transmembrane segment at 118–138 (LFGMIITIGQSIVYVMTGMYG) threads the bilayer. Over 139 to 144 (DPSEMG) the chain is Lumenal. A helical transmembrane segment spans residues 145 to 165 (AGICLLIIIQLFVAGLIVLLL). The Cytoplasmic segment spans residues 166–172 (DELLQKG). The helical transmembrane segment at 173–193 (YGLGSGISLFIATNICETIVW) threads the bilayer. The Lumenal segment spans residues 194–240 (KAFSPTTVNTGRGTEFEGAIIALFHLLATRTDKVRALREAFYRQNLP). A helical membrane pass occupies residues 241–261 (NLLNLIATVFVFAVVIYFQGF). Topologically, residues 262–288 (RVDLPIKSARYRGQYNTYPIKLFYTSN) are cytoplasmic. The helical transmembrane segment at 289–309 (IPIILQSALVSNLYVISQMLS) threads the bilayer. The Lumenal portion of the chain corresponds to 310 to 354 (TRFSGNFLVNLLGTWSDTSTGGPARAYPVGGLCYFLSPPESFGSV). A helical membrane pass occupies residues 355–375 (LDDPIHAAIYIVFMLGSCAFF). The Cytoplasmic portion of the chain corresponds to 376 to 420 (SKTWIEVSGSSAKDVAKQLKEQQMVMGGHRETSMVHELNRYIPTA). The helical transmembrane segment at 421 to 441 (AAFGGLCIGGLSVMADFLGAI) threads the bilayer. Residues 442-445 (GSGT) are Lumenal-facing. The chain crosses the membrane as a helical span at residues 446-462 (GILLAVTIIYQYFEIFV). Over 463 to 476 (KEQSEMGSMGALLF) the chain is Cytoplasmic.

Belongs to the SecY/SEC61-alpha family. As to quaternary structure, the SEC61 channel-forming translocon complex consists of channel-forming core components SEC61A1, SEC61B and SEC61G and different auxiliary components such as SEC62 and SEC63. The SEC61 channel associates with the multi-pass translocon (MPT) complex.

It localises to the endoplasmic reticulum membrane. In terms of biological role, component of SEC61 channel-forming translocon complex that mediates transport of signal peptide-containing precursor polypeptides across the endoplasmic reticulum (ER). Forms a ribosome receptor and a gated pore in the ER membrane, both functions required for cotranslational translocation of nascent polypeptides. May cooperate with auxiliary protein SEC62, SEC63 and HSPA5/BiP to enable post-translational transport of small presecretory proteins. The SEC61 channel is also involved in ER membrane insertion of transmembrane proteins: it mediates membrane insertion of the first few transmembrane segments of proteins, while insertion of subsequent transmembrane regions of multi-pass membrane proteins is mediated by the multi-pass translocon (MPT) complex. The protein is Protein transport protein Sec61 subunit alpha isoform A (sec61aa) of Oncorhynchus mykiss (Rainbow trout).